The primary structure comprises 208 residues: Methyl-CpG-binding domain protein 3-like 5 (208 aa).

It belongs to the MBD3L family.

The polypeptide is Methyl-CpG-binding domain protein 3-like 5 (MBD3L5) (Homo sapiens (Human)).